The sequence spans 52 residues: Phospholamban (52 aa).

M1 is subject to N-acetylmethionine. Topologically, residues 1-31 are cytoplasmic; that stretch reads MEKVQYITRSALRRASTLEVNPQARQRLQEL. S16 carries the post-translational modification Phosphoserine; by PKA. T17 is modified (phosphothreonine; by CaMK). A helical transmembrane segment spans residues 32-52; the sequence is FVNFCLILICLLLICIIVMLL.

The protein belongs to the phospholamban family. Homopentamer. Post-translationally, phosphorylated in response to beta-adrenergic stimulation. Phosphorylation by PKA abolishes the inhibition of ATP2A2-mediated calcium uptake. Heart.

It is found in the endoplasmic reticulum membrane. It localises to the sarcoplasmic reticulum membrane. The protein localises to the mitochondrion membrane. The protein resides in the membrane. Its function is as follows. Reversibly inhibits the activity of ATP2A2/SERCA2 in cardiac sarcoplasmic reticulum by decreasing the apparent affinity of the ATPase for Ca(2+). Binds preferentially to the ATP-bound E1 conformational form of ATP2A2 which predominates at low Ca(2+) concentrations during the diastolic phase of the cardiac cycle. Inhibits ATP2A2 Ca(2+) affinity by disrupting its allosteric activation by ATP. Modulates the contractility of the heart muscle in response to physiological stimuli via its effects on ATP2A2. Modulates calcium re-uptake during muscle relaxation and plays an important role in calcium homeostasis in the heart muscle. The degree of ATP2A2 inhibition depends on the oligomeric state of PLN. ATP2A2 inhibition is alleviated by PLN phosphorylation. This Gallus gallus (Chicken) protein is Phospholamban (PLN).